Here is a 350-residue protein sequence, read N- to C-terminus: sn-1 oleoyl-lipid 12-desaturase (350 aa).

2 helical membrane passes run 41–61 and 64–84; these read AWTQ…SLAI and WFLL…FFVI. A Histidine box-1 motif is present at residues 86 to 90; that stretch reads HDCGH. The chain crosses the membrane as a helical span at residues 98-118; sequence WVNDLVGHIFMMPLIYPFHSW. The short motif at 122–126 is the Histidine box-2 element; the sequence is HNHHH. A run of 2 helical transmembrane segments spans residues 196 to 216 and 219 to 239; these read VAVV…TTGI and FVKF…TFTI. The Histidine box-3 motif lies at 287–291; it reads HHLST.

This sequence belongs to the fatty acid desaturase type 2 family. It depends on Fe(2+) as a cofactor.

Its subcellular location is the membrane. It carries out the reaction a 1-[(9Z)-octadecenoyl]-2-acyl-glycerolipid + 2 reduced [2Fe-2S]-[ferredoxin] + O2 + 2 H(+) = a 1-[(9Z,12Z)-octadecdienoyl]-2-acyl-glycerolipid + 2 oxidized [2Fe-2S]-[ferredoxin] + 2 H2O. It participates in lipid metabolism; polyunsaturated fatty acid biosynthesis. In terms of biological role, desaturase involved in fatty acid biosynthesis. Introduces a double bond at carbon 12 of oleoyl groups (18:1) attached to the sn-1 position of the glycerol moiety of membrane glycerolipids. This chain is sn-1 oleoyl-lipid 12-desaturase, found in Anabaena variabilis.